We begin with the raw amino-acid sequence, 261 residues long: Sepiapterin reductase (261 aa).

The residue at position 1 (Met-1) is an N-acetylmethionine. 14–20 (GASRGFG) is an NADP(+) binding site. A Phosphoserine modification is found at Ser-32. NADP(+) contacts are provided by residues 42 to 43 (RN) and 69 to 70 (DL). A Phosphoserine modification is found at Ser-103. Residues 157-158 (SL) and Tyr-170 contribute to the substrate site. Lys-174 contributes to the NADP(+) binding site. Gly-199 is a substrate binding site. 201-206 (LDTDMQ) contributes to the NADP(+) binding site. Residue Ser-213 is modified to Phosphoserine; by CaMK2; in vitro. A substrate-binding site is contributed by Asp-257.

This sequence belongs to the sepiapterin reductase family. As to quaternary structure, homodimer. In terms of processing, in vitro phosphorylation of Ser-213 by CaMK2 does not change kinetic parameters.

The protein resides in the cytoplasm. It carries out the reaction L-erythro-7,8-dihydrobiopterin + NADP(+) = L-sepiapterin + NADPH + H(+). The enzyme catalyses (6R)-L-erythro-5,6,7,8-tetrahydrobiopterin + 2 NADP(+) = 6-pyruvoyl-5,6,7,8-tetrahydropterin + 2 NADPH + 2 H(+). Its function is as follows. Catalyzes the final one or two reductions in tetra-hydrobiopterin biosynthesis to form 5,6,7,8-tetrahydrobiopterin. The chain is Sepiapterin reductase (SPR) from Homo sapiens (Human).